A 248-amino-acid polypeptide reads, in one-letter code: 1-(5-phosphoribosyl)-5-[(5-phosphoribosylamino)methylideneamino] imidazole-4-carboxamide isomerase (248 aa).

Asp7 serves as the catalytic Proton acceptor. Asp129 functions as the Proton donor in the catalytic mechanism.

This sequence belongs to the HisA/HisF family.

It is found in the cytoplasm. It catalyses the reaction 1-(5-phospho-beta-D-ribosyl)-5-[(5-phospho-beta-D-ribosylamino)methylideneamino]imidazole-4-carboxamide = 5-[(5-phospho-1-deoxy-D-ribulos-1-ylimino)methylamino]-1-(5-phospho-beta-D-ribosyl)imidazole-4-carboxamide. The protein operates within amino-acid biosynthesis; L-histidine biosynthesis; L-histidine from 5-phospho-alpha-D-ribose 1-diphosphate: step 4/9. The chain is 1-(5-phosphoribosyl)-5-[(5-phosphoribosylamino)methylideneamino] imidazole-4-carboxamide isomerase from Aeromonas salmonicida (strain A449).